We begin with the raw amino-acid sequence, 357 residues long: MYDQLQSIEDRYEELGELLSDPAVISDTKRFMELSKEEANTRETVEVYRRYKQVVEGISDAEELLSENLDAEMAEMAKEELSDLKKEKEVLEDRIKILLLPKDPNDDKNIIMEIRGAAGGDEAALFAGDLFNMYQKYAEAQGWKAEVLEANVTGIGGYKEVIMMISGDNVFSKLKYESGAHRVQRVPSTESQGRIHTSTATVVVMPEAEEVEIELADKDIRVDIYHASGAGGQHVNKTASAVRLTHLPTGIVVAMQDERSQLKNREKAMKVLRARVYDQIQQEAQSEYDANRKSAVGTGDRSERIRTYNFPQNRVTDHRIGLTIQKLDQILAGKLDEIIDALVLYDQTSKLEEMQNG.

At glutamine 233 the chain carries N5-methylglutamine.

Belongs to the prokaryotic/mitochondrial release factor family. Methylated by PrmC. Methylation increases the termination efficiency of RF1.

Its subcellular location is the cytoplasm. Its function is as follows. Peptide chain release factor 1 directs the termination of translation in response to the peptide chain termination codons UAG and UAA. The sequence is that of Peptide chain release factor 1 from Enterococcus faecalis (strain ATCC 700802 / V583).